A 345-amino-acid chain; its full sequence is uncharacterized protein (345 aa).

PDZ GRASP-type domains lie at 27–112 (CGFR…WASI) and 118–207 (AIWH…HGVL). Residues 27-223 (CGFRVLKVEN…LSGPPPQPGD (197 aa)) are GRASP. Positions 229 to 345 (PMLGGPDHKV…APQNEELVKN (117 aa)) are disordered. A compositionally biased stretch (basic and acidic residues) spans 297 to 308 (KLSRELDHKTKD). Composition is skewed to polar residues over residues 309–318 (ASSTNDSQTT) and 328–338 (VNSTNDESAPQ).

It is found in the golgi apparatus membrane. This is an uncharacterized protein from Schizosaccharomyces pombe (strain 972 / ATCC 24843) (Fission yeast).